Reading from the N-terminus, the 441-residue chain is Probable tRNA pseudouridine synthase D (441 aa).

The Nucleophile role is filled by Asp89. Positions 168 to 393 (GVPNFFGVQR…SKGTRREVLL (226 aa)) constitute a TRUD domain.

Belongs to the pseudouridine synthase TruD family.

It catalyses the reaction uridine(13) in tRNA = pseudouridine(13) in tRNA. Could be responsible for synthesis of pseudouridine from uracil-13 in transfer RNAs. The sequence is that of Probable tRNA pseudouridine synthase D from Methanosarcina acetivorans (strain ATCC 35395 / DSM 2834 / JCM 12185 / C2A).